Reading from the N-terminus, the 331-residue chain is Meiotic recombination protein P22 (331 aa).

A disordered region spans residues 132 to 187 (NNIQKEVHQRNSQRRSIQCTPKKRGRKPKQPAKKLQSRISTDQLGSTPSPSKLPAK). Residues 152–167 (PKKRGRKPKQPAKKLQ) are compositionally biased toward basic residues. Over residues 168–181 (SRISTDQLGSTPSP) the composition is skewed to polar residues.

Belongs to the TOP6B-like family.

The protein localises to the chromosome. Functionally, required for formation of the mei-W68-mediated double-strand breaks (DSBs) that initiate meiotic recombination. The polypeptide is Meiotic recombination protein P22 (Drosophila melanogaster (Fruit fly)).